The chain runs to 323 residues: Melanocortin receptor 3 (323 aa).

Residues Met1–Gln37 are Extracellular-facing. Asn2, Asn16, and Asn28 each carry an N-linked (GlcNAc...) asparagine glycan. Residues Val38–Val63 form a helical membrane-spanning segment. At Val64 to Phe75 the chain is on the cytoplasmic side. A helical transmembrane segment spans residues Phe76–Val100. Residues Ile101–Asn118 are Extracellular-facing. A helical transmembrane segment spans residues Ile119–Ile140. Over Asp141–Lys160 the chain is Cytoplasmic. The chain crosses the membrane as a helical span at residues Ala161–Ile181. Topologically, residues Tyr182–Lys186 are extracellular. The helical transmembrane segment at Met187–Met210 threads the bilayer. The Cytoplasmic segment spans residues Phe211–Thr245. A helical membrane pass occupies residues Ile246–Cys268. Over Pro269–Tyr277 the chain is Extracellular. Residues Thr278 to Phe301 traverse the membrane as a helical segment. At Arg302–Gly323 the chain is on the cytoplasmic side. The S-palmitoyl cysteine moiety is linked to residue Cys315.

This sequence belongs to the G-protein coupled receptor 1 family. Brain.

It localises to the cell membrane. In terms of biological role, receptor for MSH (alpha, beta and gamma) and ACTH. This receptor is mediated by G proteins which activate adenylate cyclase. Required for expression of anticipatory patterns of activity and wakefulness during periods of limited nutrient availability and for the normal regulation of circadian clock activity in the brain. The chain is Melanocortin receptor 3 (Mc3r) from Mus musculus (Mouse).